A 152-amino-acid polypeptide reads, in one-letter code: 3-dehydroquinate dehydratase (152 aa).

Tyr-25 acts as the Proton acceptor in catalysis. Substrate is bound by residues Asn-76, His-82, and Asp-89. His-102 acts as the Proton donor in catalysis. Residues 103 to 104 (LS) and Arg-113 each bind substrate.

This sequence belongs to the type-II 3-dehydroquinase family. As to quaternary structure, homododecamer.

It carries out the reaction 3-dehydroquinate = 3-dehydroshikimate + H2O. The protein operates within metabolic intermediate biosynthesis; chorismate biosynthesis; chorismate from D-erythrose 4-phosphate and phosphoenolpyruvate: step 3/7. In terms of biological role, catalyzes a trans-dehydration via an enolate intermediate. The polypeptide is 3-dehydroquinate dehydratase (Gloeothece citriformis (strain PCC 7424) (Cyanothece sp. (strain PCC 7424))).